The chain runs to 274 residues: Undecaprenyl-diphosphatase (274 aa).

A run of 8 helical transmembrane segments spans residues 9–29 (LEYLKFFLYGLIQGFTEFIPV), 47–67 (PGASLSATIQLGSVLAIAWYF), 95–115 (ILIGTIPIVLLGGSIKLFVPY), 120–140 (VLRSNLSIALVSFLMAFFMYL), 161–181 (LIGFFQAFAIFPGVSRSGITI), 197–217 (FSFLLGIPAISLAAIVEFISS), 224–244 (LGFFPLFVGLITTFVSSLLAI), and 254–274 (NGLKIFIIYRVIFGIVILLNL).

This sequence belongs to the UppP family.

Its subcellular location is the cell inner membrane. It catalyses the reaction di-trans,octa-cis-undecaprenyl diphosphate + H2O = di-trans,octa-cis-undecaprenyl phosphate + phosphate + H(+). In terms of biological role, catalyzes the dephosphorylation of undecaprenyl diphosphate (UPP). Confers resistance to bacitracin. The chain is Undecaprenyl-diphosphatase from Prochlorococcus marinus (strain AS9601).